The sequence spans 152 residues: 6,7-dimethyl-8-ribityllumazine synthase (152 aa).

5-amino-6-(D-ribitylamino)uracil is bound by residues phenylalanine 21, alanine 55 to glutamate 57, and cysteine 79 to isoleucine 81. Alanine 84 to threonine 85 is a binding site for (2S)-2-hydroxy-3-oxobutyl phosphate. The active-site Proton donor is the histidine 87. Residue phenylalanine 112 participates in 5-amino-6-(D-ribitylamino)uracil binding. (2S)-2-hydroxy-3-oxobutyl phosphate is bound at residue arginine 126.

Belongs to the DMRL synthase family. Forms an icosahedral capsid composed of 60 subunits, arranged as a dodecamer of pentamers.

The catalysed reaction is (2S)-2-hydroxy-3-oxobutyl phosphate + 5-amino-6-(D-ribitylamino)uracil = 6,7-dimethyl-8-(1-D-ribityl)lumazine + phosphate + 2 H2O + H(+). It participates in cofactor biosynthesis; riboflavin biosynthesis; riboflavin from 2-hydroxy-3-oxobutyl phosphate and 5-amino-6-(D-ribitylamino)uracil: step 1/2. Catalyzes the formation of 6,7-dimethyl-8-ribityllumazine by condensation of 5-amino-6-(D-ribitylamino)uracil with 3,4-dihydroxy-2-butanone 4-phosphate. This is the penultimate step in the biosynthesis of riboflavin. The chain is 6,7-dimethyl-8-ribityllumazine synthase from Staphylococcus carnosus (strain TM300).